The chain runs to 426 residues: Enolase (426 aa).

Position 163 (Gln163) interacts with (2R)-2-phosphoglycerate. Catalysis depends on Glu205, which acts as the Proton donor. Residues Asp242, Glu283, and Asp310 each contribute to the Mg(2+) site. Lys335, Arg364, Ser365, and Lys386 together coordinate (2R)-2-phosphoglycerate. Lys335 acts as the Proton acceptor in catalysis.

The protein belongs to the enolase family. It depends on Mg(2+) as a cofactor.

The protein resides in the cytoplasm. Its subcellular location is the secreted. It localises to the cell surface. It catalyses the reaction (2R)-2-phosphoglycerate = phosphoenolpyruvate + H2O. It functions in the pathway carbohydrate degradation; glycolysis; pyruvate from D-glyceraldehyde 3-phosphate: step 4/5. Its function is as follows. Catalyzes the reversible conversion of 2-phosphoglycerate (2-PG) into phosphoenolpyruvate (PEP). It is essential for the degradation of carbohydrates via glycolysis. In Paenarthrobacter aurescens (strain TC1), this protein is Enolase.